Consider the following 622-residue polypeptide: Probable E3 ubiquitin-protein ligase DTX2 (622 aa).

2 WWE domains span residues 8–97 and 98–174; these read SLVQ…AVRR and HLFP…SVRR. Arg213, Arg215, and Arg233 each carry asymmetric dimethylarginine. The residue at position 249 (Lys249) is an N6-acetyllysine. Disordered stretches follow at residues 249–324 and 355–393; these read KPSL…VPMQ and APQP…EPEP. Arg256 bears the Omega-N-methylarginine mark. A compositionally biased stretch (polar residues) spans 274 to 285; the sequence is LGSQPLYRSSLS. Residues 299–322 are compositionally biased toward low complexity; it reads SGAVSASLPSGPSSSPGSVPATVP. Ser360 is subject to Phosphoserine. Positions 372–381 are enriched in basic residues; the sequence is GSVKRLRKMS. Residues 412-473 form an RING-type zinc finger; the sequence is CIICMEKLST…DGSLQCPSCK (62 aa).

It belongs to the Deltex family. Homodimer. May form a heterodimer with other members of the Deltex family. Interacts with NOTCH1.

It is found in the cytoplasm. The protein resides in the nucleus. It catalyses the reaction S-ubiquitinyl-[E2 ubiquitin-conjugating enzyme]-L-cysteine + [acceptor protein]-L-lysine = [E2 ubiquitin-conjugating enzyme]-L-cysteine + N(6)-ubiquitinyl-[acceptor protein]-L-lysine.. It functions in the pathway protein modification; protein ubiquitination. In terms of biological role, regulator of Notch signaling, a signaling pathway involved in cell-cell communications that regulates a broad spectrum of cell-fate determinations. Probably acts both as a positive and negative regulator of Notch, depending on the developmental and cell context. Mediates the antineural activity of Notch, possibly by inhibiting the transcriptional activation mediated by MATCH1. Functions as a ubiquitin ligase protein in vitro, suggesting that it may regulate the Notch pathway via some ubiquitin ligase activity. The chain is Probable E3 ubiquitin-protein ligase DTX2 (DTX2) from Homo sapiens (Human).